The primary structure comprises 600 residues: Arginine--tRNA ligase (600 aa).

A 'HIGH' region motif is present at residues 132–142; the sequence is ANPTGPLHVGH.

It belongs to the class-I aminoacyl-tRNA synthetase family. As to quaternary structure, monomer.

Its subcellular location is the cytoplasm. It carries out the reaction tRNA(Arg) + L-arginine + ATP = L-arginyl-tRNA(Arg) + AMP + diphosphate. The chain is Arginine--tRNA ligase from Ralstonia nicotianae (strain ATCC BAA-1114 / GMI1000) (Ralstonia solanacearum).